The following is a 194-amino-acid chain: Potassium-transporting ATPase KdpC subunit (194 aa).

A helical transmembrane segment spans residues leucine 12–phenylalanine 34.

It belongs to the KdpC family. In terms of assembly, the system is composed of three essential subunits: KdpA, KdpB and KdpC.

The protein localises to the cell inner membrane. Its function is as follows. Part of the high-affinity ATP-driven potassium transport (or Kdp) system, which catalyzes the hydrolysis of ATP coupled with the electrogenic transport of potassium into the cytoplasm. This subunit acts as a catalytic chaperone that increases the ATP-binding affinity of the ATP-hydrolyzing subunit KdpB by the formation of a transient KdpB/KdpC/ATP ternary complex. The protein is Potassium-transporting ATPase KdpC subunit of Salmonella schwarzengrund (strain CVM19633).